Consider the following 776-residue polypeptide: Microtubule-associated protein tau (776 aa).

The span at 1 to 26 (MAEPRQEFEVMEDHAGTYGLGDRKDQ) shows a compositional bias: basic and acidic residues. Disordered regions lie at residues 1–263 (MAEP…PAKG) and 276–591 (STEI…LKNV). Ala2 bears the N-acetylalanine mark. Phosphotyrosine occurs at positions 18 and 29. A Glycyl lysine isopeptide (Lys-Gly) (interchain with G-Cter in ubiquitin) cross-link involves residue Lys44. Residues Ser46 and Ser61 each carry the phosphoserine modification. Over residues 61–71 (SETSDAKSTPT) the composition is skewed to polar residues. Thr69, Thr71, and Thr111 each carry phosphothreonine. Basic and acidic residues-rich tracts occupy residues 179-189 (EGGRHAPELLK) and 207-216 (GGKERPGSKE). Ser214 carries the post-translational modification Phosphoserine. Acidic residues predominate over residues 217–228 (EVDEDRDVDESS). Residues 314–323 (EQAHSEEHLG) are compositionally biased toward basic and acidic residues. Residues 324 to 340 (RAAFPGAPGEGPEARGP) show a composition bias toward low complexity. Composition is skewed to basic and acidic residues over residues 344–356 (EDTKEADLPESSE) and 381–393 (KSKDGTGSDDKKA). Residues 440–452 (KYVSSVTPRTGSS) are compositionally biased toward polar residues. A compositionally biased stretch (basic and acidic residues) spans 455-466 (KEMKLKGADGKT). At Thr470 the chain carries Phosphothreonine. Arg472 carries the post-translational modification Omega-N-methylarginine. Lys480 is subject to N6,N6-dimethyllysine; alternate. N6-acetyllysine; alternate is present on Lys480. Phosphothreonine occurs at positions 486, 492, and 498. 3 positions are modified to phosphoserine: Ser502, Ser526, and Ser530. Residues 517 to 528 (RSERGEPPKSGD) show a composition bias toward basic and acidic residues. Positions 529–549 (RSGYSSPGSPGTPGSRSRTPS) are enriched in low complexity. Tyr532 bears the Phosphotyrosine mark. A phosphoserine mark is found at Ser533, Ser534, and Ser537. Phosphothreonine occurs at positions 540 and 547. Phosphoserine is present on Ser549. Thr552 is modified (phosphothreonine). Lys560 carries the post-translational modification N6-acetyllysine. A Phosphothreonine modification is found at Thr566. 2 positions are modified to phosphoserine: Ser570 and Ser572. Tau/MAP repeat units lie at residues 579-609 (QTAPVPMPDLKNVKSKIGSTENLKHQPGGGK), 610-640 (VQIINKKLDLSNVQSKCGSKDNIKHVPGGGS), 641-671 (VQIVYKPVDLSKVTSKCGSLGNIHHKPGGGQ), and 672-703 (VEVKSEKLDFKDRVQSKIGSLDNITHVPGGGN). Lys589 participates in a covalent cross-link: Glycyl lysine isopeptide (Lys-Gly) (interchain with G-Cter in ubiquitin). Lys594 carries the post-translational modification N6-acetyllysine; alternate. Lys594 bears the N6-methyllysine; alternate mark. Residue Lys594 forms a Glycyl lysine isopeptide (Lys-Gly) (interchain with G-Cter in ubiquitin); alternate linkage. Ser597 bears the Phosphoserine mark. Lys602 is covalently cross-linked (Glycyl lysine isopeptide (Lys-Gly) (interchain with G-Cter in ubiquitin)). Lys616 bears the N6-acetyllysine; alternate mark. A Glycyl lysine isopeptide (Lys-Gly) (interchain with G-Cter in ubiquitin); alternate cross-link involves residue Lys616. 2 positions are modified to phosphoserine: Ser620 and Ser624. Lys625 carries the N6-acetyllysine modification. Ser628 carries the phosphoserine modification. Lys633 carries the post-translational modification N6-acetyllysine; alternate. A Glycyl lysine isopeptide (Lys-Gly) (interchain with G-Cter in ubiquitin); alternate cross-link involves residue Lys633. A Phosphoserine modification is found at Ser640. Residue Lys646 is modified to N6,N6-dimethyllysine; alternate. Residues Lys646, Lys652, and Lys656 each carry the N6-acetyllysine; alternate modification. Glycyl lysine isopeptide (Lys-Gly) (interchain with G-Cter in ubiquitin); alternate cross-links involve residues Lys646, Lys652, and Lys656. Ser659 is modified (phosphoserine). N6-acetyllysine; alternate occurs at positions 666, 678, and 682. Residues Lys666, Lys678, and Lys682 each participate in a glycyl lysine isopeptide (Lys-Gly) (interchain with G-Cter in ubiquitin); alternate cross-link. Residue Arg684 is modified to Omega-N-methylarginine. A Phosphoserine modification is found at Ser687. A Glycyl lysine isopeptide (Lys-Gly) (interchain with G-Cter in ubiquitin) cross-link involves residue Lys688. A Phosphoserine modification is found at Ser691. Lys704 carries the post-translational modification N6-acetyllysine; alternate. Residue Lys704 forms a Glycyl lysine isopeptide (Lys-Gly) (interchain with G-Cter in ubiquitin); alternate linkage. Lys710 is covalently cross-linked (Glycyl lysine isopeptide (Lys-Gly) (interchain with G-Cter in ubiquitin)). Lys720 is subject to N6-acetyllysine; alternate. Lys720 participates in a covalent cross-link: Glycyl lysine isopeptide (Lys-Gly) (interchain with G-Cter in ubiquitin); alternate. Tyr729 is subject to Phosphotyrosine. A phosphoserine mark is found at Ser731 and Ser735. Positions 733-752 (VVSGDTSPRHLSNVSSTGSI) are disordered. Polar residues predominate over residues 736-751 (GDTSPRHLSNVSSTGS). The residue at position 738 (Thr738) is a Phosphothreonine. 4 positions are modified to phosphoserine: Ser739, Ser744, Ser751, and Ser757. Thr762 is subject to Phosphothreonine.

Interacts with MARK1, MARK2, MARK3 and MARK4. Interacts with SQSTM1 when polyubiquitinated. Interacts with PSMC2 through SQSTM1. Interacts with FKBP4. Binds to CSNK1D. Interacts with SGK1. Interacts with EPM2A; the interaction dephosphorylates MAPT at Ser-396. Interacts with PIN1. Interacts with LRRK2. Interacts with LRP1, leading to endocytosis; this interaction is reduced in the presence of LRPAP1/RAP. In terms of processing, polyubiquitinated. Requires functional TRAF6 and may provoke SQSTM1-dependent degradation by the proteasome. Phosphorylation at various serine and threonine residues in S-P or T-P motifs by proline-directed protein kinases (PDPK1, CDK1, CDK5, GSK3, MAPK) (a few sites per protein in interphase, more in mitosis), and at serine residues in K-X-G-S motifs by MAP/microtubule affinity-regulating kinase (MARK1, MARK2, MARK3 or MARK4), causing detachment from microtubules, and their disassembly. Phosphorylation at Ser-597 by BRSK1 and BRSK2 in neurons affects ability to bind microtubules and plays a role in neuron polarization. Phosphorylation at Ser-214 by SGK1 mediates microtubule depolymerization and neurite formation in hippocampal neurons. Phosphorylated by PHK. Dephosphorylation at several serine and threonine residues by the serine/threonine phosphatase PPP5C.

It localises to the cytoplasm. The protein resides in the cytosol. Its subcellular location is the cell membrane. The protein localises to the cytoskeleton. It is found in the cell projection. It localises to the axon. The protein resides in the dendrite. In terms of biological role, promotes microtubule assembly and stability, and might be involved in the establishment and maintenance of neuronal polarity. The C-terminus binds axonal microtubules while the N-terminus binds neural plasma membrane components, suggesting that tau functions as a linker protein between both. Axonal polarity is predetermined by tau localization (in the neuronal cell) in the domain of the cell body defined by the centrosome. The short isoforms allow plasticity of the cytoskeleton whereas the longer isoforms may preferentially play a role in its stabilization. The sequence is that of Microtubule-associated protein tau (MAPT) from Gorilla gorilla gorilla (Western lowland gorilla).